The following is a 455-amino-acid chain: tRNA modification GTPase MnmE (455 aa).

Residues arginine 24, glutamate 81, and lysine 120 each coordinate (6S)-5-formyl-5,6,7,8-tetrahydrofolate. The region spanning 216 to 378 (GMTVVIAGRP…LREHLKACMG (163 aa)) is the TrmE-type G domain. Asparagine 226 contacts K(+). GTP contacts are provided by residues 226–231 (NAGKSS), 245–251 (TDIAGTT), 270–273 (DTAG), 335–338 (NKAD), and 359–361 (SAR). Serine 230 contacts Mg(2+). Residues threonine 245, isoleucine 247, and threonine 250 each coordinate K(+). Threonine 251 serves as a coordination point for Mg(2+). A (6S)-5-formyl-5,6,7,8-tetrahydrofolate-binding site is contributed by lysine 455.

This sequence belongs to the TRAFAC class TrmE-Era-EngA-EngB-Septin-like GTPase superfamily. TrmE GTPase family. Homodimer. Heterotetramer of two MnmE and two MnmG subunits. Requires K(+) as cofactor.

Its subcellular location is the cytoplasm. In terms of biological role, exhibits a very high intrinsic GTPase hydrolysis rate. Involved in the addition of a carboxymethylaminomethyl (cmnm) group at the wobble position (U34) of certain tRNAs, forming tRNA-cmnm(5)s(2)U34. The protein is tRNA modification GTPase MnmE of Pseudomonas aeruginosa (strain UCBPP-PA14).